Reading from the N-terminus, the 435-residue chain is Virulence factor PIT1 (435 aa).

5 helical membrane-spanning segments follow: residues 33 to 53 (ETTTWNLPIMIAQALLVSEVI), 77 to 97 (IFFILIKYLTIFAVIFDILVT), 111 to 131 (WAWTSSTFYFMCSTLVFCVIG), 143 to 163 (VASWSLSVGLMGQFAVAMWTN), and 204 to 224 (TFWFLLYNTIFESSILMACCI). A glycan (N-linked (GlcNAc...) asparagine) is linked at asparagine 330. Residues 392 to 404 (SPQMPSKAQSQSI) are compositionally biased toward polar residues. Residues 392–435 (SPQMPSKAQSQSIPYKREVEVTVDMSPVPPPPGPSPAPLPAPYM) form a disordered region. Pro residues predominate over residues 418–435 (PVPPPPGPSPAPLPAPYM).

Post-translationally, O-mannosylated by PMT4. Is also N-glycosylated.

Its subcellular location is the cell membrane. Its function is as follows. Plasma membrane virulence factor required for spreading and inducing tumors in infected leaves. The chain is Virulence factor PIT1 from Mycosarcoma maydis (Corn smut fungus).